The primary structure comprises 244 residues: NAD reductase coq12 (244 aa).

The segment at 131 to 158 (NPLMNSEKNSTSVEDLPGSNRTQQTSSH) is disordered. A compositionally biased stretch (polar residues) spans 132-158 (PLMNSEKNSTSVEDLPGSNRTQQTSSH).

It localises to the mitochondrion. It carries out the reaction a reduced flavin + NAD(+) = an oxidized flavin + NADH + 2 H(+). NADH-dependent flavin reductase that acts in the coenzyme Q biosynthetic pathway. Required for synthesis of the p-hydroxybenzoic acid (PHB) precursor to form a quinone backbone. The protein is NAD reductase coq12 of Schizosaccharomyces pombe (strain 972 / ATCC 24843) (Fission yeast).